The chain runs to 259 residues: Ribosomal RNA large subunit methyltransferase E (259 aa).

S-adenosyl-L-methionine contacts are provided by Gly58, Trp60, Asp78, Asp96, and Asp120. Residue Lys160 is the Proton acceptor of the active site.

Belongs to the class I-like SAM-binding methyltransferase superfamily. RNA methyltransferase RlmE family.

It is found in the cytoplasm. It carries out the reaction uridine(2552) in 23S rRNA + S-adenosyl-L-methionine = 2'-O-methyluridine(2552) in 23S rRNA + S-adenosyl-L-homocysteine + H(+). In terms of biological role, specifically methylates the uridine in position 2552 of 23S rRNA at the 2'-O position of the ribose in the fully assembled 50S ribosomal subunit. The chain is Ribosomal RNA large subunit methyltransferase E from Methanococcus vannielii (strain ATCC 35089 / DSM 1224 / JCM 13029 / OCM 148 / SB).